The chain runs to 65 residues: Large ribosomal subunit protein bL35 (65 aa).

Belongs to the bacterial ribosomal protein bL35 family.

The chain is Large ribosomal subunit protein bL35 from Syntrophobacter fumaroxidans (strain DSM 10017 / MPOB).